The following is a 908-amino-acid chain: Protein translocase subunit SecA (908 aa).

ATP contacts are provided by residues Gln87, 105–109 (GEGKT), and Asp494. Residues 871-908 (QEFSGGNLNRSQSNGSSVTVTTSSGGGTERKTSRRRKR) form a disordered region. Positions 874–884 (SGGNLNRSQSN) are enriched in polar residues.

It belongs to the SecA family. As to quaternary structure, monomer and homodimer. Part of the essential Sec protein translocation apparatus which comprises SecA, SecYEG and auxiliary proteins SecDF. Other proteins may also be involved.

Its subcellular location is the cell inner membrane. The protein localises to the cytoplasm. The enzyme catalyses ATP + H2O + cellular proteinSide 1 = ADP + phosphate + cellular proteinSide 2.. Functionally, part of the Sec protein translocase complex. Interacts with the SecYEG preprotein conducting channel. Has a central role in coupling the hydrolysis of ATP to the transfer of proteins into and across the cell membrane, serving as an ATP-driven molecular motor driving the stepwise translocation of polypeptide chains across the membrane. The polypeptide is Protein translocase subunit SecA (Leptospira interrogans serogroup Icterohaemorrhagiae serovar Lai (strain 56601)).